The following is a 207-amino-acid chain: Large ribosomal subunit protein uL4 (207 aa).

Positions 43-85 (SRRQGTHDTKGRSEVRGGGRKPWKQKGTGRARQGSIRSPQWVG) are disordered. Over residues 47 to 59 (GTHDTKGRSEVRG) the composition is skewed to basic and acidic residues. Basic residues predominate over residues 60 to 71 (GGRKPWKQKGTG).

It belongs to the universal ribosomal protein uL4 family. In terms of assembly, part of the 50S ribosomal subunit.

One of the primary rRNA binding proteins, this protein initially binds near the 5'-end of the 23S rRNA. It is important during the early stages of 50S assembly. It makes multiple contacts with different domains of the 23S rRNA in the assembled 50S subunit and ribosome. Its function is as follows. Forms part of the polypeptide exit tunnel. The polypeptide is Large ribosomal subunit protein uL4 (Exiguobacterium sibiricum (strain DSM 17290 / CCUG 55495 / CIP 109462 / JCM 13490 / 255-15)).